Reading from the N-terminus, the 345-residue chain is Uroporphyrinogen decarboxylase (345 aa).

Substrate contacts are provided by residues Arg27 to Arg31, Phe46, Asp76, Tyr152, Ser207, and His321.

It belongs to the uroporphyrinogen decarboxylase family. In terms of assembly, homodimer.

It localises to the cytoplasm. It catalyses the reaction uroporphyrinogen III + 4 H(+) = coproporphyrinogen III + 4 CO2. Its pathway is porphyrin-containing compound metabolism; protoporphyrin-IX biosynthesis; coproporphyrinogen-III from 5-aminolevulinate: step 4/4. Its function is as follows. Catalyzes the decarboxylation of four acetate groups of uroporphyrinogen-III to yield coproporphyrinogen-III. The protein is Uroporphyrinogen decarboxylase of Staphylococcus aureus (strain bovine RF122 / ET3-1).